Consider the following 126-residue polypeptide: Large ribosomal subunit protein uL22c (126 aa).

This sequence belongs to the universal ribosomal protein uL22 family. Part of the 50S ribosomal subunit.

It localises to the plastid. Its subcellular location is the chloroplast. In terms of biological role, this protein binds specifically to 23S rRNA. The globular domain of the protein is located near the polypeptide exit tunnel on the outside of the subunit, while an extended beta-hairpin is found that lines the wall of the exit tunnel in the center of the 70S ribosome. In Cryptomeria japonica (Japanese cedar), this protein is Large ribosomal subunit protein uL22c (rpl22).